The primary structure comprises 409 residues: uncharacterized protein (409 aa).

Positions 3–162 (TDVRVLRQDD…DDVRLRYAVP (160 aa)) constitute an N-acetyltransferase domain. Residues 82-84 (VSV), 90-95 (RRGVLT), and 118-119 (SE) each bind acetyl-CoA. Tyr123 functions as the Proton donor in the catalytic mechanism. The active-site Proton acceptor; via carboxylate is Phe409.

It belongs to the acetyltransferase Eis family. Homohexamer; trimer of dimers.

This is an uncharacterized protein from Streptomyces avermitilis (strain ATCC 31267 / DSM 46492 / JCM 5070 / NBRC 14893 / NCIMB 12804 / NRRL 8165 / MA-4680).